The primary structure comprises 304 residues: Undecaprenyl-diphosphatase (304 aa).

Transmembrane regions (helical) follow at residues 5-25, 47-67, 72-92, 111-131, 137-157, 209-231, 248-268, and 282-302; these read FLFI…EFVP, GFPE…VVVL, ISSS…LKAS, FGIN…LFHD, LFST…LIVI, ISGL…AMVG, TNLI…LVVI, and IFAI…FTKV.

This sequence belongs to the UppP family.

It is found in the cell membrane. It catalyses the reaction di-trans,octa-cis-undecaprenyl diphosphate + H2O = di-trans,octa-cis-undecaprenyl phosphate + phosphate + H(+). Functionally, catalyzes the dephosphorylation of undecaprenyl diphosphate (UPP). Confers resistance to bacitracin. The sequence is that of Undecaprenyl-diphosphatase from Clostridium perfringens (strain SM101 / Type A).